We begin with the raw amino-acid sequence, 383 residues long: BRISC and BRCA1-A complex member 2 (383 aa).

M1 carries the post-translational modification N-acetylmethionine. At S2 the chain carries Phosphoserine. UEV-like stretches follow at residues 30–147 and 275–364; these read DATN…TLLE and IAAF…RAKA.

Belongs to the BABAM2 family. As to quaternary structure, component of the ARISC complex, at least composed of UIMC1/RAP80, ABRAXAS1, BRCC3/BRCC36, BABAM2 and BABAM1/NBA1. Component of the BRCA1-A complex, at least composed of BRCA1, BARD1, UIMC1/RAP80, ABRAXAS1, BRCC3/BRCC36, BABAM2 and BABAM1/NBA1. In the BRCA1-A complex, interacts directly with ABRAXAS1, BRCC3/BRCC36 and BABAM1/NBA1. Binds polyubiquitin. Component of the BRISC complex, at least composed of ABRAXAS2, BRCC3/BRCC36, BABAM2 and BABAM1/NBA1. Identified in a complex with SHMT2 and the other subunits of the BRISC complex. Component of the BRCA1/BRCA2 containing complex (BRCC), which also contains BRCA1, BRCA2, BARD1, BRCC3/BRCC36 and RAD51. BRCC is a ubiquitin E3 ligase complex that enhances cellular survival following DNA damage. May interact with FAS and TNFRSF1A. In terms of tissue distribution, expressed in brain, heart, kidney, liver, lung, testis, germinal center B-cells and various mouse cell lines.

Its subcellular location is the cytoplasm. It localises to the nucleus. Component of the BRCA1-A complex, a complex that specifically recognizes 'Lys-63'-linked ubiquitinated histones H2A and H2AX at DNA lesions sites, leading to target the BRCA1-BARD1 heterodimer to sites of DNA damage at double-strand breaks (DSBs). The BRCA1-A complex also possesses deubiquitinase activity that specifically removes 'Lys-63'-linked ubiquitin on histones H2A and H2AX. In the BRCA1-A complex, it acts as an adapter that bridges the interaction between BABAM1/NBA1 and the rest of the complex, thereby being required for the complex integrity and modulating the E3 ubiquitin ligase activity of the BRCA1-BARD1 heterodimer. Probably also plays a role as a component of the BRISC complex, a multiprotein complex that specifically cleaves 'Lys-63'-linked ubiquitin. May regulate TNF-alpha signaling through its interactions with TNFRSF1A. In terms of biological role, component of the BRCA1-A complex, a complex that specifically recognizes 'Lys-63'-linked ubiquitinated histones H2A and H2AX at DNA lesions sites, leading to target the BRCA1-BARD1 heterodimer to sites of DNA damage at double-strand breaks (DSBs). The BRCA1-A complex also possesses deubiquitinase activity that specifically removes 'Lys-63'-linked ubiquitin on histones H2A and H2AX. In the BRCA1-A complex, it acts as an adapter that bridges the interaction between BABAM1/NBA1 and the rest of the complex, thereby being required for the complex integrity and modulating the E3 ubiquitin ligase activity of the BRCA1-BARD1 heterodimer. Component of the BRISC complex, a multiprotein complex that specifically cleaves 'Lys-63'-linked ubiquitin in various substrates. Within the BRISC complex, acts as an adapter that bridges the interaction between BABAM1/NBA1 and the rest of the complex, thereby being required for the complex integrity. The BRISC complex is required for normal mitotic spindle assembly and microtubule attachment to kinetochores via its role in deubiquitinating NUMA1. The BRISC complex plays a role in interferon signaling via its role in the deubiquitination of the interferon receptor IFNAR1; deubiquitination increases IFNAR1 activity by enhancing its stability and cell surface expression. Down-regulates the response to bacterial lipopolysaccharide (LPS) via its role in IFNAR1 deubiquitination. May play a role in homeostasis or cellular differentiation in cells of neural, epithelial and germline origins. May also act as a death receptor-associated anti-apoptotic protein, which inhibits the mitochondrial apoptotic pathway. May regulate TNF-alpha signaling through its interactions with TNFRSF1A; however these effects may be indirect. This is BRISC and BRCA1-A complex member 2 (Babam2) from Mus musculus (Mouse).